A 79-amino-acid chain; its full sequence is UPF0180 protein Bcer98_1118 (79 aa).

The protein belongs to the UPF0180 family.

The chain is UPF0180 protein Bcer98_1118 from Bacillus cytotoxicus (strain DSM 22905 / CIP 110041 / 391-98 / NVH 391-98).